The primary structure comprises 507 residues: Archaeal-type glutamate synthase [NADPH] (507 aa).

4Fe-4S ferredoxin-type domains follow at residues Phe-10–Asn-39 and Asn-41–Asn-70. Positions 19, 22, 25, 29, 50, 53, 56, and 60 each coordinate [4Fe-4S] cluster.

Belongs to the glutamate synthase family. FMN serves as cofactor.

It catalyses the reaction 2 L-glutamate + NADP(+) = L-glutamine + 2-oxoglutarate + NADPH + H(+). The chain is Archaeal-type glutamate synthase [NADPH] from Thermotoga neapolitana (strain ATCC 49049 / DSM 4359 / NBRC 107923 / NS-E).